A 339-amino-acid polypeptide reads, in one-letter code: Small ribosomal subunit protein mS27 (339 aa).

Residues 1–37 (MGTITVVINEGPILLIRALHRATTNKKMFRSTVWRRF) constitute a mitochondrion transit peptide.

It belongs to the mitochondrion-specific ribosomal protein mS27 family. As to quaternary structure, component of the mitochondrial small ribosomal subunit (mt-SSU). Mature yeast 74S mitochondrial ribosomes consist of a small (37S) and a large (54S) subunit. The 37S small subunit contains a 15S ribosomal RNA (15S mt-rRNA) and 34 different proteins. The 54S large subunit contains a 21S rRNA (21S mt-rRNA) and 46 different proteins.

The protein resides in the mitochondrion. In terms of biological role, component of the mitochondrial ribosome (mitoribosome), a dedicated translation machinery responsible for the synthesis of mitochondrial genome-encoded proteins, including at least some of the essential transmembrane subunits of the mitochondrial respiratory chain. The mitoribosomes are attached to the mitochondrial inner membrane and translation products are cotranslationally integrated into the membrane. In Saccharomyces cerevisiae (strain ATCC 204508 / S288c) (Baker's yeast), this protein is Small ribosomal subunit protein mS27 (MRP13).